We begin with the raw amino-acid sequence, 442 residues long: D-serine dehydratase (442 aa).

Position 118 is an N6-(pyridoxal phosphate)lysine (K118).

This sequence belongs to the serine/threonine dehydratase family. DsdA subfamily. As to quaternary structure, monomer. The cofactor is pyridoxal 5'-phosphate.

It catalyses the reaction D-serine = pyruvate + NH4(+). In Shigella dysenteriae serotype 1 (strain Sd197), this protein is D-serine dehydratase.